A 416-amino-acid polypeptide reads, in one-letter code: Lysosome-associated membrane glycoprotein 3 (416 aa).

The N-terminal stretch at 1-27 (MPRQLSAAAVLFASLAVILHDGSQMRA) is a signal peptide. At 28-381 (KAFPKTRDYS…NVDECSSDYT (354 aa)) the chain is on the lumenal side. The disordered stretch occupies residues 135–217 (PPTITPPAHT…ASTVPGSTLA (83 aa)). Residues 142–170 (AHTTGTSSSTVNHTTGNATQPSNQTTLPA) show a composition bias toward polar residues. A compositionally biased stretch (low complexity) spans 188 to 208 (PTHAPGTTAAAHNTTRTAAPA). N-linked (GlcNAc...) asparagine glycosylation occurs at Asn-200. The cysteines at positions 237 and 274 are disulfide-linked. A glycan (N-linked (GlcNAc...) asparagine) is linked at Asn-291. Cys-339 and Cys-376 are joined by a disulfide. The helical transmembrane segment at 382-402 (IVLPVIGAIVVGLCLVGMGVY) threads the bilayer. Over 403–416 (KIRLRCQSSGYQRI) the chain is Cytoplasmic.

Belongs to the LAMP family. As to quaternary structure, monomer. Interacts with FURIN.

The protein localises to the cell surface. Its subcellular location is the lysosome membrane. The protein resides in the cytoplasmic vesicle membrane. It is found in the early endosome membrane. Functionally, lysosomal membrane glycoprotein which plays a role in the unfolded protein response (UPR) that contributes to protein degradation and cell survival during proteasomal dysfunction. Plays a role in the process of fusion of the lysosome with the autophagosome, thereby modulating the autophagic process. Promotes hepatocellular lipogenesis through activation of the PI3K/Akt pathway. May also play a role in dendritic cell function and in adaptive immunity. This is Lysosome-associated membrane glycoprotein 3 (LAMP3) from Macaca mulatta (Rhesus macaque).